The chain runs to 307 residues: UDP-3-O-acyl-N-acetylglucosamine deacetylase (307 aa).

Residues H78, H241, and D245 each contribute to the Zn(2+) site. Catalysis depends on H268, which acts as the Proton donor.

This sequence belongs to the LpxC family. Zn(2+) is required as a cofactor.

The enzyme catalyses a UDP-3-O-[(3R)-3-hydroxyacyl]-N-acetyl-alpha-D-glucosamine + H2O = a UDP-3-O-[(3R)-3-hydroxyacyl]-alpha-D-glucosamine + acetate. It functions in the pathway glycolipid biosynthesis; lipid IV(A) biosynthesis; lipid IV(A) from (3R)-3-hydroxytetradecanoyl-[acyl-carrier-protein] and UDP-N-acetyl-alpha-D-glucosamine: step 2/6. Catalyzes the hydrolysis of UDP-3-O-myristoyl-N-acetylglucosamine to form UDP-3-O-myristoylglucosamine and acetate, the committed step in lipid A biosynthesis. In Acidovorax ebreus (strain TPSY) (Diaphorobacter sp. (strain TPSY)), this protein is UDP-3-O-acyl-N-acetylglucosamine deacetylase.